The sequence spans 68 residues: Beta-defensin 1 (68 aa).

The N-terminal stretch at 1 to 21 is a signal peptide; that stretch reads MRTSYLLLFTLCLLLSEMASG. Residues 22–32 constitute a propeptide that is removed on maturation; that stretch reads DNFLTGLGHRS. 3 disulfide bridges follow: Cys-37–Cys-66, Cys-44–Cys-59, and Cys-49–Cys-67.

This sequence belongs to the beta-defensin family. Monomer. Homodimer.

The protein resides in the secreted. Its subcellular location is the membrane. In terms of biological role, has bactericidal activity. May act as a ligand for C-C chemokine receptor CCR6. Positively regulates the sperm motility and bactericidal activity in a CCR6-dependent manner. Binds to CCR6 and triggers Ca2+ mobilization in the sperm which is important for its motility. This chain is Beta-defensin 1 (DEFB1), found in Allochrocebus preussi (Preuss's monkey).